Consider the following 634-residue polypeptide: Glutamate--tRNA ligase (634 aa).

Positions P108–H118 match the 'HIGH' region motif.

This sequence belongs to the class-I aminoacyl-tRNA synthetase family. Glutamate--tRNA ligase type 2 subfamily.

It localises to the cytoplasm. The enzyme catalyses tRNA(Glu) + L-glutamate + ATP = L-glutamyl-tRNA(Glu) + AMP + diphosphate. Functionally, catalyzes the attachment of glutamate to tRNA(Glu) in a two-step reaction: glutamate is first activated by ATP to form Glu-AMP and then transferred to the acceptor end of tRNA(Glu). This is Glutamate--tRNA ligase from Methanoregula boonei (strain DSM 21154 / JCM 14090 / 6A8).